Reading from the N-terminus, the 431-residue chain is Histidine--tRNA ligase (431 aa).

The protein belongs to the class-II aminoacyl-tRNA synthetase family. Homodimer.

It is found in the cytoplasm. It catalyses the reaction tRNA(His) + L-histidine + ATP = L-histidyl-tRNA(His) + AMP + diphosphate + H(+). This is Histidine--tRNA ligase from Neisseria meningitidis serogroup C (strain 053442).